The chain runs to 172 residues: Ribosome maturation factor RimM (172 aa).

The PRC barrel domain occupies 95 to 168; the sequence is AEGEFYYHQI…RVDVEIMEGL (74 aa).

It belongs to the RimM family. In terms of assembly, binds ribosomal protein uS19.

It localises to the cytoplasm. An accessory protein needed during the final step in the assembly of 30S ribosomal subunit, possibly for assembly of the head region. Essential for efficient processing of 16S rRNA. May be needed both before and after RbfA during the maturation of 16S rRNA. It has affinity for free ribosomal 30S subunits but not for 70S ribosomes. This Streptococcus equi subsp. zooepidemicus (strain H70) protein is Ribosome maturation factor RimM.